The primary structure comprises 486 residues: Cardiolipin synthase A (486 aa).

2 helical membrane passes run 3-23 (TVYTLVSWLAILGYWLLIAGV) and 38-58 (MAWLLIIYILPLVGIIAYLAV). 2 PLD phosphodiesterase domains span residues 219–246 (MDLRQHRKMIMIDNYIAYTGSMNMVDPR) and 399–426 (EGGLLHTKSVLVDGELSLVGTVNLDMRS). Active-site residues include His-224, Lys-226, Asp-231, His-404, Lys-406, and Asp-411.

Belongs to the phospholipase D family. Cardiolipin synthase subfamily. ClsA sub-subfamily.

It is found in the cell inner membrane. It carries out the reaction 2 a 1,2-diacyl-sn-glycero-3-phospho-(1'-sn-glycerol) = a cardiolipin + glycerol. Functionally, catalyzes the reversible phosphatidyl group transfer from one phosphatidylglycerol molecule to another to form cardiolipin (CL) (diphosphatidylglycerol) and glycerol. The polypeptide is Cardiolipin synthase A (Shigella boydii serotype 4 (strain Sb227)).